A 77-amino-acid chain; its full sequence is Acyl carrier protein (77 aa).

Positions 2–77 (ADVLERVTKI…DAVTYIESHL (76 aa)) constitute a Carrier domain. Serine 37 carries the post-translational modification O-(pantetheine 4'-phosphoryl)serine.

The protein belongs to the acyl carrier protein (ACP) family. Post-translationally, 4'-phosphopantetheine is transferred from CoA to a specific serine of apo-ACP by AcpS. This modification is essential for activity because fatty acids are bound in thioester linkage to the sulfhydryl of the prosthetic group.

The protein resides in the cytoplasm. It functions in the pathway lipid metabolism; fatty acid biosynthesis. Carrier of the growing fatty acid chain in fatty acid biosynthesis. The sequence is that of Acyl carrier protein from Bacillus mycoides (strain KBAB4) (Bacillus weihenstephanensis).